The primary structure comprises 120 residues: uncharacterized protein (120 aa).

The helical transmembrane segment at 19 to 41 (YPELFITWCVMTYTFGVAGYMLG) threads the bilayer. A disordered region spans residues 57 to 78 (SKNAHPWEDTKSSSGKSDESLD). The segment covering 61-75 (HPWEDTKSSSGKSDE) has biased composition (basic and acidic residues).

The protein resides in the membrane. This is an uncharacterized protein from Schizosaccharomyces pombe (strain 972 / ATCC 24843) (Fission yeast).